The chain runs to 121 residues: Holo-[acyl-carrier-protein] synthase (121 aa).

Mg(2+) contacts are provided by aspartate 8 and glutamate 55.

The protein belongs to the P-Pant transferase superfamily. AcpS family. The cofactor is Mg(2+).

It is found in the cytoplasm. The catalysed reaction is apo-[ACP] + CoA = holo-[ACP] + adenosine 3',5'-bisphosphate + H(+). In terms of biological role, transfers the 4'-phosphopantetheine moiety from coenzyme A to a Ser of acyl-carrier-protein. In Caldicellulosiruptor bescii (strain ATCC BAA-1888 / DSM 6725 / KCTC 15123 / Z-1320) (Anaerocellum thermophilum), this protein is Holo-[acyl-carrier-protein] synthase.